The primary structure comprises 204 residues: Uridylate kinase (204 aa).

26-31 (GAGKGT) contacts ATP. The interval 46–76 (SAGDLLRAEQGRAGSQYGELIKNCIKEGQIV) is NMP. A ribonucleoside 5'-phosphate contacts are provided by residues Arg52, 74–76 (QIV), 104–107 (GFPR), and Gln111. Residues 141-151 (ERGKTSGRSDD) form an LID region. Residue Arg142 participates in ATP binding. The a ribonucleoside 5'-phosphate site is built by Arg148 and Arg159. An ATP-binding site is contributed by Arg187.

It belongs to the adenylate kinase family. UMP-CMP kinase subfamily. As to quaternary structure, monomer. Mg(2+) is required as a cofactor.

The protein resides in the cytoplasm. It localises to the nucleus. The enzyme catalyses UMP + ATP = UDP + ADP. In terms of biological role, catalyzes the phosphorylation of pyrimidine nucleoside monophosphates at the expense of ATP. Plays an important role in de novo pyrimidine nucleotide biosynthesis. Has preference for UMP and dUMP as phosphate acceptors, but can also use CMP, dCMP, AMP, GMP, dGMP and dTMP. ATP and dATP are the best phosphate donors, but can also use GTP, dGTP, dCTP, and dTTP to some degree. The polypeptide is Uridylate kinase (Saccharomyces cerevisiae (strain ATCC 204508 / S288c) (Baker's yeast)).